We begin with the raw amino-acid sequence, 541 residues long: Putative apolipoprotein N-acyltransferase (541 aa).

6 consecutive transmembrane segments (helical) span residues 31-51 (PLPAWSLAPVQVIALAVAAHA), 65-85 (GWLFAMFSFSLGLYWLYVSMH), 89-109 (GLAAPLAAAGVLALSAFLALF), 144-164 (AACWAALEWLRAVVLTGFPWL), 181-201 (LLGVHGMALLAAFAAAALAGL), and 215-235 (LAAGVALLLAGAGWLLGQFSW). One can recognise a CN hydrolase domain in the interval 248 to 511 (VQGNVEQSQK…AGVLPVAVQG (264 aa)). Residue glutamate 292 is the Proton acceptor of the active site. Lysine 366 is a catalytic residue. Cysteine 416 serves as the catalytic Nucleophile.

The protein belongs to the CN hydrolase family. Apolipoprotein N-acyltransferase subfamily.

It is found in the cell inner membrane. It catalyses the reaction N-terminal S-1,2-diacyl-sn-glyceryl-L-cysteinyl-[lipoprotein] + a glycerophospholipid = N-acyl-S-1,2-diacyl-sn-glyceryl-L-cysteinyl-[lipoprotein] + a 2-acyl-sn-glycero-3-phospholipid + H(+). Its pathway is protein modification; lipoprotein biosynthesis (N-acyl transfer). Functionally, catalyzes the phospholipid dependent N-acylation of the N-terminal cysteine of apolipoprotein, the last step in lipoprotein maturation. This Bordetella parapertussis (strain 12822 / ATCC BAA-587 / NCTC 13253) protein is Putative apolipoprotein N-acyltransferase.